Here is a 253-residue protein sequence, read N- to C-terminus: Sugar fermentation stimulation protein homolog (253 aa).

This sequence belongs to the SfsA family.

The polypeptide is Sugar fermentation stimulation protein homolog (Prochlorococcus marinus (strain NATL1A)).